The following is a 1492-amino-acid chain: MEPNMDANSITITVEGMTCISCVRTIEQQIGKVNGVHHIKVSLEEKSATVIYNPKLQTPKTLQEAIDDMGFDALLHNANPLPVLTNTVFLTVTAPLALPWDHIQSTLLKTKGVTGVKISPQQRSAVVTIIPSVVSANQIVELVPDLSLDMGTQEKKSGTSEEHSTPQAGEVLLKMRVEGMTCHSCTSTIEGKVGKLQGVQRIKVSLDNQEATIVYQPHLITAEEIKKQIEAVGFPAFIKKQPKYLKLGAIDVERLKSTPVKSSEGSQQKSPAYPSDSAITFTIDGMHCKSCVSNIESALSTLQYVSSIVVSLENRSAIVKYNASLVTPEILRKAIEAVSPGQYRVSISSEVESPTSSPSSSSLQKMPLNLVSQPLTQEVVININGMTCNSCVQSIEGVISKKPGVKSIHVSLTNSTGTIEYDPLLTSPEPLREAIEDMGFDAVLPADMKEPLVVIAQPSLETPLLPSTTEPENVMTPVQNKCYIQVSGMTCASCVANIERNLRREEGIYSVLVALMAGKAEVRYNPAVIQPRVIAELIRELGFGAVVMENAGEGNGILELVVRGMTCASCVHKIESTLTKHKGIFYCSVALATNKAHIKYDPEIIGPRDIIHTIGNLGFEASLVKKDRSANHLDHKREIKQWRGSFLVSLFFCIPVMGLMIYMMVMDHHLATLNHNQNMSNEEMINMHSSMFLERQILPGLSIMNLLSLLLCLPVQFCGGWYFYIQAYKALRHKTANMDVLIVLATTIAFAYSLVILLVAMYERAKVNPITFFDTPPMLFVFIALGRWLEHIAKGKTSEALAKLISLQATEATIVTLNSENLLLSEEQVDVELVQRGDIIKVVPGGKFPVDGRVIEGHSMVDESLITGEAMPVAKKPGSTVIAGSINQNGSLLIRATHVGADTTLSQIVKLVEEAQTSKAPIQQFADKLSGYFVPFIVLVSIVTLLVWIIIGFQNFEIVEAYFPGYNRSISRTETIIRFAFQASITVLCIACPCSLGLATPTAVMVGTGVGAQNGILIKGGEPLEMAHKVKVVVFDKTGTITHGTPVVNQVKVLVESNKISRNKILAIVGTAESNSEHPLGAAVTKYCKQELDTETLGTCTDFQVVPGCGISCKVTNIEGLLHKSNLKIEENNIKNASLVQIDAINEQSSPSSSMIIDAHLSNAVNTQQYKVLIGNREWMIRNGLVISNDVDESMIEHERRGRTAVLVTIDDELCGLIAIADTVKPEAELAVHILKSMGLEVVLMTGDNSKTARSIASQVGITKVFAEVLPSHKVAKVKQLQEEGKRVAMVGDGINDSPALAMASVGIAIGTGTDVAIEAADVVLIRNDLLDVVASIDLSRKTVKRIRINFVFALIYNLIGIPIAAGVFLPIGLVLQPWMGSAAMAASSVSVVLSSLFLKLYRKPTYDNYELRPRSHTGQRSPSEISVHVGIDDTSRNSPRLGLLDRIVNYSRASINSLLSDKRSLNSVVTSEPDKHSLLVGDFREDDDTTL.

The Cytoplasmic segment spans residues 1–645; it reads MEPNMDANSI…KREIKQWRGS (645 aa). HMA domains are found at residues 8 to 74 and 85 to 151; these read NSIT…FDAL and TNTV…LDMG. Cu(+) contacts are provided by threonine 18, cysteine 19, and cysteine 22. Threonine 152 is subject to Phosphothreonine. An HMA 3 domain is found at 171–237; it reads VLLKMRVEGM…QIEAVGFPAF (67 aa). Positions 182 and 185 each coordinate Cu(+). Serine 270 is modified (phosphoserine). Residues 277 to 343 form the HMA 4 domain; the sequence is SAITFTIDGM…AIEAVSPGQY (67 aa). 2 residues coordinate Cu(+): cysteine 288 and cysteine 291. The residue at position 327 (threonine 327) is a Phosphothreonine. Residues serine 339, serine 353, serine 357, and serine 362 each carry the phosphoserine modification. HMA domains follow at residues 377-443, 480-546, and 556-622; these read QEVV…FDAV, NKCY…FGAV, and GILE…FEAS. Residues cysteine 388, cysteine 391, cysteine 491, cysteine 494, cysteine 567, and cysteine 570 each coordinate Cu(+). A helical transmembrane segment spans residues 646–667; the sequence is FLVSLFFCIPVMGLMIYMMVMD. At 668–706 the chain is on the extracellular side; it reads HHLATLNHNQNMSNEEMINMHSSMFLERQILPGLSIMNL. A glycan (N-linked (GlcNAc...) asparagine) is linked at asparagine 678. A helical transmembrane segment spans residues 707 to 726; the sequence is LSLLLCLPVQFCGGWYFYIQ. Residues 727 to 733 lie on the Cytoplasmic side of the membrane; sequence AYKALRH. A helical membrane pass occupies residues 734 to 754; sequence KTANMDVLIVLATTIAFAYSL. Over 755-773 the chain is Extracellular; it reads VILLVAMYERAKVNPITFF. Residues 774–794 traverse the membrane as a helical segment; that stretch reads DTPPMLFVFIALGRWLEHIAK. Over 795–927 the chain is Cytoplasmic; it reads GKTSEALAKL…SKAPIQQFAD (133 aa). A helical membrane pass occupies residues 928–951; sequence KLSGYFVPFIVLVSIVTLLVWIII. At 952-981 the chain is on the extracellular side; it reads GFQNFEIVEAYFPGYNRSISRTETIIRFAF. A helical membrane pass occupies residues 982-1003; it reads QASITVLCIACPCSLGLATPTA. The Cytoplasmic segment spans residues 1004–1348; the sequence is VMVGTGVGAQ…LSRKTVKRIR (345 aa). Aspartate 1036 acts as the 4-aspartylphosphate intermediate in catalysis. Glutamate 1073 lines the ATP pocket. At threonine 1204 the chain carries Phosphothreonine. Mg(2+) contacts are provided by aspartate 1293 and aspartate 1297. The helical transmembrane segment at 1349 to 1366 threads the bilayer; the sequence is INFVFALIYNLIGIPIAA. Residues 1367-1377 lie on the Extracellular side of the membrane; the sequence is GVFLPIGLVLQ. Residues 1378–1397 traverse the membrane as a helical segment; the sequence is PWMGSAAMAASSVSVVLSSL. At 1398 to 1492 the chain is on the cytoplasmic side; sequence FLKLYRKPTY…DFREDDDTTL (95 aa). 5 positions are modified to phosphoserine: serine 1422, serine 1424, serine 1452, serine 1455, and serine 1458. Positions 1459–1460 match the Endocytosis signal motif; that stretch reads LL. Phosphoserine occurs at positions 1461, 1465, 1468, and 1478. The interval 1478–1492 is PDZD11-binding; sequence SLLVGDFREDDDTTL. The short motif at 1479 to 1480 is the Endocytosis signal element; sequence LL.

Belongs to the cation transport ATPase (P-type) (TC 3.A.3) family. Type IB subfamily. In terms of assembly, monomer. Interacts with PDZD11. Interacts with ATOX1 and COMMD1. Interacts with TYRP1. Directly interacts with SOD3; this interaction is copper-dependent and is required for SOD3 activity. As to expression, expressed in hippocampal neuron (at protein level). Expressed in anterior pituitary gland (at protein level).

Its subcellular location is the golgi apparatus. It is found in the trans-Golgi network membrane. The protein localises to the cell membrane. It localises to the melanosome membrane. The protein resides in the early endosome membrane. Its subcellular location is the cell projection. It is found in the axon. The protein localises to the dendrite. It localises to the postsynaptic density. The catalysed reaction is Cu(+)(in) + ATP + H2O = Cu(+)(out) + ADP + phosphate + H(+). Its function is as follows. ATP-driven copper (Cu(+)) ion pump that plays an important role in intracellular copper ion homeostasis. Within a catalytic cycle, acquires Cu(+) ion from donor protein on the cytoplasmic side of the membrane and delivers it to acceptor protein on the lumenal side. The transfer of Cu(+) ion across the membrane is coupled to ATP hydrolysis and is associated with a transient phosphorylation that shifts the pump conformation from inward-facing to outward-facing state. Under physiological conditions, at low cytosolic copper concentration, it is localized at the trans-Golgi network (TGN) where it transfers Cu(+) ions to cuproenzymes of the secretory pathway. Upon elevated cytosolic copper concentrations, it relocalizes to the plasma membrane where it is responsible for the export of excess Cu(+) ions. May play a dual role in neuron function and survival by regulating cooper efflux and neuronal transmission at the synapse as well as by supplying Cu(+) ions to enzymes such as PAM, TYR and SOD3. In the melanosomes of pigmented cells, provides copper cofactor to TYR to form an active TYR holoenzyme for melanin biosynthesis. The protein is Copper-transporting ATPase 1 of Rattus norvegicus (Rat).